Here is a 100-residue protein sequence, read N- to C-terminus: Large ribosomal subunit protein uL23 (100 aa).

This sequence belongs to the universal ribosomal protein uL23 family. In terms of assembly, part of the 50S ribosomal subunit. Contacts protein L29, and trigger factor when it is bound to the ribosome.

Functionally, one of the early assembly proteins it binds 23S rRNA. One of the proteins that surrounds the polypeptide exit tunnel on the outside of the ribosome. Forms the main docking site for trigger factor binding to the ribosome. The polypeptide is Large ribosomal subunit protein uL23 (Synechococcus sp. (strain CC9902)).